The primary structure comprises 447 residues: Interferon-induced protein 44-like (447 aa).

The 159-residue stretch at 1–159 (MKVTARLTWI…PVECEIFRVD (159 aa)) folds into the TLDc domain.

This sequence belongs to the IFI44 family. As to quaternary structure, HA-28 antigen forms a complex with Kb MHC in BALB.B donor cells. Interacts with FKBP5; this interaction modulates IKBKB and IKBKE kinase activities. In terms of tissue distribution, expressed on cells of the hematopoietic lineage. Detected in transformed cell lines of the macrophage and B-cell lineage. Expressed in spleen and bone marrow.

The protein localises to the cytoplasm. Functionally, type I interferon-stimulated gene (ISG) that plays a critical role in antiviral and antibacterial activity. During bacterial infection, promotes macrophage differentiation and facilitates inflammatory cytokine secretion. Plays a role in the control of respiratory syncycial virus/RSV infection, reducing the ability of the virus to replicate. Acts as a feedback regulator of IFN responses by negatively regulating IKBKB kinase activity through interaction with FKBP5. Its function is as follows. Precursor of the histocompatibility antigen HA-28 in BALB.B mice. More generally, minor histocompatibility antigens refer to immunogenic peptide which, when complexed with MHC, can generate an immune response after recognition by specific T-cells. The peptides are derived from polymorphic intracellular proteins, which are cleaved by normal pathways of antigen processing. The binding of these peptides to MHC molecules and its expression on the cell surface can stimulate T-cell responses and thereby trigger graft rejection or graft-versus-host disease (GVHD). More specifically, HA-28 minor antigen is transcribed in the BALB.B donor but not in host C57BL/6 cells. HA-28 is presented to the donor BALB.B cell surface by Kb MHC. This complex HA-28/Kb MHC elicits cytotoxic T-cell response in C57BL/6 mice immunized with BALB.B spleen cells. It induces C57BL/6 mice cells recognition and lysis by CD8 T-cell from BALB.B mice. This chain is Interferon-induced protein 44-like (Ifi44l), found in Mus musculus (Mouse).